The sequence spans 320 residues: MINKIGVLTSGGDSPGMNAAIRSVVRAGLSEGLEIYGISDGYQGLYQDRMRKLDRYSVSDIINRGGTFLGSARFQEFREEAIRAIALNNMSKYGLGALVVIGGDGSYMGAKLLTEMGLPCIGLPGTIDNDVAGTDYTIGYFTALETVVEAIDRLRDTSTSHQRISIVEVMGRYCGDLTMAAAIAGGCEFIVLPEVEFQPEDLVYEIKASIAQGKKHAIVAITEYICNVFELALYIEKETGRETRATVLGHIQRGGNPVAYDRILASRMGAYSIELLLQGYRGRCVGVQNERLVHHDIADVIQNMKRPFRRDFLETARKLF.

Glycine 12 is an ATP binding site. ADP-binding positions include 22-26 (RSVVR) and 55-60 (RYSVSD). ATP-binding positions include 73 to 74 (RF) and 103 to 106 (GDGS). Aspartate 104 is a binding site for Mg(2+). 126-128 (TID) provides a ligand contact to substrate. The active-site Proton acceptor is the aspartate 128. Residue arginine 155 participates in ADP binding. Substrate-binding positions include arginine 163 and 170–172 (MGR). ADP-binding positions include 186 to 188 (GCE) and 214 to 216 (KKH). Substrate contacts are provided by residues glutamate 223, arginine 244, and 250 to 253 (HIQR).

Belongs to the phosphofructokinase type A (PFKA) family. ATP-dependent PFK group I subfamily. Prokaryotic clade 'B1' sub-subfamily. Homotetramer. The cofactor is Mg(2+).

The protein localises to the cytoplasm. It catalyses the reaction beta-D-fructose 6-phosphate + ATP = beta-D-fructose 1,6-bisphosphate + ADP + H(+). It functions in the pathway carbohydrate degradation; glycolysis; D-glyceraldehyde 3-phosphate and glycerone phosphate from D-glucose: step 3/4. With respect to regulation, allosterically activated by ADP and other diphosphonucleosides, and allosterically inhibited by phosphoenolpyruvate. Catalyzes the phosphorylation of D-fructose 6-phosphate to fructose 1,6-bisphosphate by ATP, the first committing step of glycolysis. This chain is ATP-dependent 6-phosphofructokinase, found in Baumannia cicadellinicola subsp. Homalodisca coagulata.